The sequence spans 364 residues: Mannitol-1-phosphate 5-dehydrogenase (364 aa).

Residue 6–17 (VLHFGAGNIGRG) participates in NAD(+) binding.

It belongs to the mannitol dehydrogenase family.

The enzyme catalyses D-mannitol 1-phosphate + NAD(+) = beta-D-fructose 6-phosphate + NADH + H(+). This Mycoplasma pneumoniae (strain ATCC 29342 / M129 / Subtype 1) (Mycoplasmoides pneumoniae) protein is Mannitol-1-phosphate 5-dehydrogenase (mtlD).